Consider the following 597-residue polypeptide: Arginine--tRNA ligase (597 aa).

The short motif at 138–148 is the 'HIGH' region element; it reads ANPTGPMHVGH.

Belongs to the class-I aminoacyl-tRNA synthetase family. Monomer.

It localises to the cytoplasm. The catalysed reaction is tRNA(Arg) + L-arginine + ATP = L-arginyl-tRNA(Arg) + AMP + diphosphate. In Nitrobacter winogradskyi (strain ATCC 25391 / DSM 10237 / CIP 104748 / NCIMB 11846 / Nb-255), this protein is Arginine--tRNA ligase.